A 197-amino-acid chain; its full sequence is MPKVGMQPIRRQQLIEATLQAVDQVGMGDASIALIARLAGVSNGIISHYFQDKNGLIAATMRYLMSVLSENVTARRQALADSSPRAHLQVIIEGNFDASQVNGPAMKTWLAFWATSMHQPSLHRLQRINDHRLYSNLCCEFRRVLPLEDARTAARGLAALIDGLWLRGALSGDAFDTAQAQQIAYEYMDFQLAKQVS.

Residues 8 to 68 (PIRRQQLIEA…ATMRYLMSVL (61 aa)) form the HTH tetR-type domain. The H-T-H motif DNA-binding region spans 31–50 (SIALIARLAGVSNGIISHYF).

The protein operates within amine and polyamine biosynthesis; betaine biosynthesis via choline pathway [regulation]. Repressor involved in the biosynthesis of the osmoprotectant glycine betaine. It represses transcription of the choline transporter BetT and the genes of BetAB involved in the synthesis of glycine betaine. The protein is HTH-type transcriptional regulator BetI of Pseudomonas fluorescens (strain Pf0-1).